We begin with the raw amino-acid sequence, 111 residues long: MSEVQQLPIRAVGEYVILVSEPAQAGDEEVTESGLIIGKRVQGEVPELCVVHSVGPDVPEGFCEVGDLTSLPVGQIRNVPHPFVALGLKQPKEIKQKFVTCHYKAIPCLYK.

Homoheptamer. Forms a stable complex with groEL in the presence of ATP.

In terms of biological role, essential for proper capsid assembly. In absence of Gp31 the major capsid protein (Gp23) assembles into 'lumps'. Acts as a co-chaperonin with the host groEL protein. This chain is Capsid assembly protein Gp31 (31), found in Escherichia coli (Bacteriophage T4).